A 529-amino-acid chain; its full sequence is Beta-glucosidase 11 (529 aa).

The N-terminal stretch at 1 to 25 (MAVAGAMVMSGALLLLHLLAFTCVA) is a signal peptide. Residues glutamine 54, histidine 157, and 202 to 203 (NE) each bind a beta-D-glucoside. Glutamate 203 acts as the Proton donor in catalysis. Cysteine 222 and cysteine 230 are oxidised to a cystine. Tyrosine 346 serves as a coordination point for a beta-D-glucoside. Residue asparagine 361 is glycosylated (N-linked (GlcNAc...) asparagine). Residue glutamate 417 participates in a beta-D-glucoside binding. Glutamate 417 (nucleophile) is an active-site residue. An N-linked (GlcNAc...) asparagine glycan is attached at asparagine 425. A beta-D-glucoside contacts are provided by residues tryptophan 466, 473-474 (EW), and phenylalanine 482.

The protein belongs to the glycosyl hydrolase 1 family.

The enzyme catalyses Hydrolysis of terminal, non-reducing beta-D-glucosyl residues with release of beta-D-glucose.. This Oryza sativa subsp. japonica (Rice) protein is Beta-glucosidase 11 (BGLU11).